Reading from the N-terminus, the 557-residue chain is Probable transcription factor sol4 (557 aa).

Residues 26-186 are fungal transcription factor domain; the sequence is IQYFFEDINW…EREMRRRMFC (161 aa). Residues 463-490 form a disordered region; the sequence is SGTQTRSMPSTETLTYNSSSSTSYGDGH. Over residues 472 to 485 the composition is skewed to low complexity; the sequence is STETLTYNSSSSTS.

The protein localises to the nucleus. In terms of biological role, probable transcription factor that regulates the expression of the gene cluster that mediates the biosynthesis of the phytotoxin solanapyrone, a causal agent of early blight disease of potato and tomato. This chain is Probable transcription factor sol4 (sol4), found in Alternaria solani.